We begin with the raw amino-acid sequence, 73 residues long: Omega-conotoxin GVIA (73 aa).

The first 22 residues, 1-22, serve as a signal peptide directing secretion; that stretch reads MKLTCVVIVAVLLLTACQLITA. A propeptide spanning residues 23–45 is cleaved from the precursor; sequence DDSRGTQKHRALGSTTELSLSTR. 3 cysteine pairs are disulfide-bonded: Cys-46–Cys-61, Cys-53–Cys-64, and Cys-60–Cys-71. 4-hydroxyproline is present on residues Pro-49, Pro-55, and Pro-66. Tyr-72 is subject to Tyrosine amide; in form omega-conotoxin GVIA.

Belongs to the conotoxin O1 superfamily. As to expression, expressed by the venom duct.

It localises to the secreted. In terms of biological role, omega-conotoxins act at presynaptic membranes, they bind and block voltage-gated calcium channels (Cav). This toxin blocks N-type calcium channels (Cav2.2/CACNA1B) with a high potency (it displaces [125I]GVIA with an IC(50)=3.7-38 pM). The chain is Omega-conotoxin GVIA from Conus geographus (Geography cone).